The sequence spans 487 residues: 3-octaprenyl-4-hydroxybenzoate carboxy-lyase (487 aa).

Asn-172 is a binding site for Mn(2+). Prenylated FMN contacts are provided by residues 175-177 (IYR), 189-191 (RWL), and 194-195 (RG). Residue Glu-238 participates in Mn(2+) binding. Asp-287 serves as the catalytic Proton donor.

It belongs to the UbiD family. In terms of assembly, homohexamer. It depends on prenylated FMN as a cofactor. The cofactor is Mn(2+).

It localises to the cell membrane. The catalysed reaction is a 4-hydroxy-3-(all-trans-polyprenyl)benzoate + H(+) = a 2-(all-trans-polyprenyl)phenol + CO2. Its pathway is cofactor biosynthesis; ubiquinone biosynthesis. Its function is as follows. Catalyzes the decarboxylation of 3-octaprenyl-4-hydroxy benzoate to 2-octaprenylphenol, an intermediate step in ubiquinone biosynthesis. The protein is 3-octaprenyl-4-hydroxybenzoate carboxy-lyase of Actinobacillus pleuropneumoniae serotype 7 (strain AP76).